The sequence spans 162 residues: Transcription elongation factor GreA (162 aa).

Positions 45-65 (NAEYHAAKERQLFIEARINEL) form a coiled coil.

It belongs to the GreA/GreB family.

In terms of biological role, necessary for efficient RNA polymerase transcription elongation past template-encoded arresting sites. The arresting sites in DNA have the property of trapping a certain fraction of elongating RNA polymerases that pass through, resulting in locked ternary complexes. Cleavage of the nascent transcript by cleavage factors such as GreA or GreB allows the resumption of elongation from the new 3'terminus. GreA releases sequences of 2 to 3 nucleotides. The sequence is that of Transcription elongation factor GreA from Wolinella succinogenes (strain ATCC 29543 / DSM 1740 / CCUG 13145 / JCM 31913 / LMG 7466 / NCTC 11488 / FDC 602W) (Vibrio succinogenes).